Reading from the N-terminus, the 499-residue chain is Glucose-6-phosphate isomerase (499 aa).

The active-site Proton donor is the Glu352. Residues His383 and Lys487 contribute to the active site.

The protein belongs to the GPI family.

It localises to the cytoplasm. It catalyses the reaction alpha-D-glucose 6-phosphate = beta-D-fructose 6-phosphate. It participates in carbohydrate biosynthesis; gluconeogenesis. It functions in the pathway carbohydrate degradation; glycolysis; D-glyceraldehyde 3-phosphate and glycerone phosphate from D-glucose: step 2/4. Catalyzes the reversible isomerization of glucose-6-phosphate to fructose-6-phosphate. This chain is Glucose-6-phosphate isomerase, found in Legionella pneumophila (strain Lens).